The primary structure comprises 772 residues: Metal transporter CNNM4 (772 aa).

At 1–175 (MAPGGGGGRR…SLLFMVEEHG (175 aa)) the chain is on the extracellular side. The N-linked (GlcNAc...) asparagine glycan is linked to Asn-120. The chain crosses the membrane as a helical span at residues 176-196 (RFLPLWLHILLVLVLLVLSGI). Residues 176–356 (RFLPLWLHIL…EPYNDLVKEE (181 aa)) enclose the CNNM transmembrane domain. The Cytoplasmic portion of the chain corresponds to 197–237 (FSGLNLGLMALDPMELRIVQNCGTEKERRYARKIEPIRRKG). Residues 238 to 258 (NYLLCSLLLGNVLVNTSLTIL) constitute an intramembrane region (helical). The Cytoplasmic segment spans residues 259–261 (LDN). Residues 262–282 (LIGSGIMAVASSTIGIVIFGE) traverse the membrane as a helical segment. The Extracellular portion of the chain corresponds to 283–290 (ILPQALCS). Residues 291-313 (RHGLAVGANTIVLTKIFMLLTFP) form a helical membrane-spanning segment. Residues 314 to 772 (LSFPISKLLD…LHRASQEGTI (459 aa)) are Cytoplasmic-facing. CBS domains are found at residues 375–436 (MTQL…CTPL) and 443–509 (YNHP…ILDE). Residues 647–676 (PDRSPAHPTPLSRSASLSYPDRNTDMTPSS) form a disordered region. 3 positions are modified to phosphoserine: Ser-658, Ser-662, and Ser-767.

The protein belongs to the ACDP family. As to quaternary structure, interacts with COX11. In terms of tissue distribution, present in spinal cord dorsal horn neurons and in developing teeth (at protein level). In the tooth, higher expression is found in the ameloblasts during the transition and maturation phases of amelogenesis; reduced expression in the odontoblasts.

The protein resides in the cell membrane. Its function is as follows. Probable metal transporter. The interaction with the metal ion chaperone COX11 suggests that it may play a role in sensory neuron functions. May play a role in biomineralization and retinal function. The protein is Metal transporter CNNM4 (Cnnm4) of Rattus norvegicus (Rat).